Here is a 215-residue protein sequence, read N- to C-terminus: Peroxiredoxin (215 aa).

Residues 6-161 (PLIGEEFPRL…ILRAVRALQT (156 aa)) enclose the Thioredoxin domain. C48 acts as the Cysteine sulfenic acid (-SOH) intermediate in catalysis. R124 provides a ligand contact to substrate. C205 and C211 are disulfide-bonded.

It belongs to the peroxiredoxin family. Prx6 subfamily. As to quaternary structure, homodecamer. Pentamer of dimers that assemble into a ring structure.

Its subcellular location is the cytoplasm. The catalysed reaction is a hydroperoxide + [thioredoxin]-dithiol = an alcohol + [thioredoxin]-disulfide + H2O. In terms of biological role, thiol-specific peroxidase that catalyzes the reduction of hydrogen peroxide and organic hydroperoxides to water and alcohols, respectively. Plays a role in cell protection against oxidative stress by detoxifying peroxides. The sequence is that of Peroxiredoxin from Thermotoga petrophila (strain ATCC BAA-488 / DSM 13995 / JCM 10881 / RKU-1).